We begin with the raw amino-acid sequence, 323 residues long: Lipoyl synthase (323 aa).

[4Fe-4S] cluster-binding residues include Cys-61, Cys-66, Cys-72, Cys-87, Cys-91, Cys-94, and Ser-300. Residues 73–289 form the Radical SAM core domain; the sequence is WDKKHATFMI…ETVAYSKGFL (217 aa).

This sequence belongs to the radical SAM superfamily. Lipoyl synthase family. Requires [4Fe-4S] cluster as cofactor.

It localises to the cytoplasm. It catalyses the reaction [[Fe-S] cluster scaffold protein carrying a second [4Fe-4S](2+) cluster] + N(6)-octanoyl-L-lysyl-[protein] + 2 oxidized [2Fe-2S]-[ferredoxin] + 2 S-adenosyl-L-methionine + 4 H(+) = [[Fe-S] cluster scaffold protein] + N(6)-[(R)-dihydrolipoyl]-L-lysyl-[protein] + 4 Fe(3+) + 2 hydrogen sulfide + 2 5'-deoxyadenosine + 2 L-methionine + 2 reduced [2Fe-2S]-[ferredoxin]. It participates in protein modification; protein lipoylation via endogenous pathway; protein N(6)-(lipoyl)lysine from octanoyl-[acyl-carrier-protein]: step 2/2. Its function is as follows. Catalyzes the radical-mediated insertion of two sulfur atoms into the C-6 and C-8 positions of the octanoyl moiety bound to the lipoyl domains of lipoate-dependent enzymes, thereby converting the octanoylated domains into lipoylated derivatives. The chain is Lipoyl synthase from Rhizobium leguminosarum bv. trifolii (strain WSM2304).